Reading from the N-terminus, the 470-residue chain is GTPase Der (470 aa).

2 consecutive EngA-type G domains span residues 32 to 195 (PVVA…PTIS) and 206 to 379 (RRVA…KSWD). GTP is bound by residues 38–45 (GRPNVGKS), 85–89 (DTGGW), 147–150 (NKVD), 212–219 (GKPNVGKS), 259–263 (DTAGL), and 324–327 (NKWD). The KH-like domain occupies 380–462 (TRVSTGRLNT…PIRINVRVRE (83 aa)).

The protein belongs to the TRAFAC class TrmE-Era-EngA-EngB-Septin-like GTPase superfamily. EngA (Der) GTPase family. In terms of assembly, associates with the 50S ribosomal subunit.

Its function is as follows. GTPase that plays an essential role in the late steps of ribosome biogenesis. The chain is GTPase Der from Mycolicibacterium vanbaalenii (strain DSM 7251 / JCM 13017 / BCRC 16820 / KCTC 9966 / NRRL B-24157 / PYR-1) (Mycobacterium vanbaalenii).